A 226-amino-acid chain; its full sequence is Putative N-acetylmannosamine-6-phosphate 2-epimerase (226 aa).

This sequence belongs to the NanE family.

It catalyses the reaction an N-acyl-D-glucosamine 6-phosphate = an N-acyl-D-mannosamine 6-phosphate. It functions in the pathway amino-sugar metabolism; N-acetylneuraminate degradation; D-fructose 6-phosphate from N-acetylneuraminate: step 3/5. Functionally, converts N-acetylmannosamine-6-phosphate (ManNAc-6-P) to N-acetylglucosamine-6-phosphate (GlcNAc-6-P). This chain is Putative N-acetylmannosamine-6-phosphate 2-epimerase, found in Mycoplasma mycoides subsp. mycoides SC (strain CCUG 32753 / NCTC 10114 / PG1).